Consider the following 86-residue polypeptide: Small ribosomal subunit protein bS16 (86 aa).

It belongs to the bacterial ribosomal protein bS16 family.

This is Small ribosomal subunit protein bS16 from Stenotrophomonas maltophilia (strain R551-3).